We begin with the raw amino-acid sequence, 402 residues long: MGFFRILFSLSLCALSLAIPSKLIGLENTKDVIPNSYIVVMKSAVSEAEFQSHQAWASKIHSRSLGKRDGVLDDFGGLKATFQFEGLKGYSGAFDKKTIELITRNPAVDYVEVDRVVKLDAISTQRDAPSWGLGRISHRRVGSADYVFDDSAGSGITIYGVDTGIDIRHPEFGGRAAWGTNTVDDEDTDQNGHGTHTAGTFGGATYGIAKKANIVAVKVLNAQGTGTTSGVIQGIQWCTDHAGRNGLRGKAAMNLSLGIRGSTIFNRVAEAAQASGIFLAVAAGNDGTDAGQFSPASARGVCTAAATNSQDAATSWSNYGSVVAVYGPGADIVSAYPNDDTATLSGTSMASPHVCGVGAYLMALEGIGPDTVCDRIKQLASESVTNQKPNTTKKLLYNGSGA.

An N-terminal signal peptide occupies residues 1-18 (MGFFRILFSLSLCALSLA). Residues 19–120 (IPSKLIGLEN…VEVDRVVKLD (102 aa)) constitute a propeptide that is removed on maturation. The Inhibitor I9 domain occupies 36–119 (SYIVVMKSAV…YVEVDRVVKL (84 aa)). A Peptidase S8 domain is found at 130 to 402 (SWGLGRISHR…KKLLYNGSGA (273 aa)). Active-site charge relay system residues include Asp-162 and His-193. N-linked (GlcNAc...) asparagine glycosylation occurs at Asn-254. Ser-348 acts as the Charge relay system in catalysis. N-linked (GlcNAc...) asparagine glycosylation is found at Asn-390 and Asn-398.

It belongs to the peptidase S8 family.

It is found in the secreted. Secreted subtilisin-like serine protease with keratinolytic activity that contributes to pathogenicity. This Arthroderma gypseum (strain ATCC MYA-4604 / CBS 118893) (Microsporum gypseum) protein is Subtilisin-like protease 9 (SUB9).